The following is a 576-amino-acid chain: 2-succinyl-5-enolpyruvyl-6-hydroxy-3-cyclohexene-1-carboxylate synthase (576 aa).

Belongs to the TPP enzyme family. MenD subfamily. As to quaternary structure, homodimer. Mg(2+) serves as cofactor. It depends on Mn(2+) as a cofactor. The cofactor is thiamine diphosphate.

The enzyme catalyses isochorismate + 2-oxoglutarate + H(+) = 5-enolpyruvoyl-6-hydroxy-2-succinyl-cyclohex-3-ene-1-carboxylate + CO2. It functions in the pathway quinol/quinone metabolism; 1,4-dihydroxy-2-naphthoate biosynthesis; 1,4-dihydroxy-2-naphthoate from chorismate: step 2/7. The protein operates within quinol/quinone metabolism; menaquinone biosynthesis. In terms of biological role, catalyzes the thiamine diphosphate-dependent decarboxylation of 2-oxoglutarate and the subsequent addition of the resulting succinic semialdehyde-thiamine pyrophosphate anion to isochorismate to yield 2-succinyl-5-enolpyruvyl-6-hydroxy-3-cyclohexene-1-carboxylate (SEPHCHC). This Aliivibrio fischeri (strain ATCC 700601 / ES114) (Vibrio fischeri) protein is 2-succinyl-5-enolpyruvyl-6-hydroxy-3-cyclohexene-1-carboxylate synthase.